A 728-amino-acid chain; its full sequence is Probable 3',5'-cyclic phosphodiesterase pde-5 (728 aa).

In terms of domain architecture, GAF spans 214 to 371; it reads SMDAVIIKVM…HHAKLYDKIR (158 aa). The 320-residue stretch at 390–709 folds into the PDEase domain; the sequence is CNADEVNKLK…KKWEELAEEQ (320 aa). His-465 (proton donor) is an active-site residue. A divalent metal cation-binding residues include His-469, His-503, Asp-504, and Asp-614. Residues 691-728 are a coiled coil; that stretch reads MRERCEYNAKKWEELAEEQRKKQEALAQQNGEANETQE. A disordered region spans residues 708–728; it reads EQRKKQEALAQQNGEANETQE. Polar residues predominate over residues 716–728; sequence LAQQNGEANETQE.

It belongs to the cyclic nucleotide phosphodiesterase family. It depends on a divalent metal cation as a cofactor.

It carries out the reaction a nucleoside 3',5'-cyclic phosphate + H2O = a nucleoside 5'-phosphate + H(+). Redundantly with pde-1, plays a role in the AFD thermosensory neurons to regulate microvilli receptive ending morphology, possibly by regulating cGMP levels. In Caenorhabditis elegans, this protein is Probable 3',5'-cyclic phosphodiesterase pde-5 (pde-5).